The following is a 316-amino-acid chain: Protoheme IX farnesyltransferase (316 aa).

9 helical membrane passes run 32–52 (VMSLVVFTAFAGLVLAPGHIH), 53–73 (PVLGTIAILCIAVGAGASGAL), 93–113 (IPAGRIAPSEALAFGLVLSGF), 116–136 (VILGLAVNWLSAGILAFTIFF), 152–172 (NIVIGGAAGAFPPMIGWACVT), 180–200 (TVLFLIIFLWTPAHFWALALF), 221–241 (VTKHQIVAYAVLTAVCAVLPS), 252–271 (LVAAALGAIFIYCSIAVWRM), and 289–309 (IFYLFAVFSALMIDRLAPVLV).

Belongs to the UbiA prenyltransferase family. Protoheme IX farnesyltransferase subfamily.

The protein resides in the cell inner membrane. The catalysed reaction is heme b + (2E,6E)-farnesyl diphosphate + H2O = Fe(II)-heme o + diphosphate. It participates in porphyrin-containing compound metabolism; heme O biosynthesis; heme O from protoheme: step 1/1. Its function is as follows. Converts heme B (protoheme IX) to heme O by substitution of the vinyl group on carbon 2 of heme B porphyrin ring with a hydroxyethyl farnesyl side group. The protein is Protoheme IX farnesyltransferase of Rhizobium johnstonii (strain DSM 114642 / LMG 32736 / 3841) (Rhizobium leguminosarum bv. viciae).